Reading from the N-terminus, the 109-residue chain is Nucleoid-associated protein VV1_2004 (109 aa).

This sequence belongs to the YbaB/EbfC family. Homodimer.

Its subcellular location is the cytoplasm. It localises to the nucleoid. In terms of biological role, binds to DNA and alters its conformation. May be involved in regulation of gene expression, nucleoid organization and DNA protection. The sequence is that of Nucleoid-associated protein VV1_2004 from Vibrio vulnificus (strain CMCP6).